We begin with the raw amino-acid sequence, 326 residues long: Glyceraldehyde-3-phosphate dehydrogenase, cytosolic (326 aa).

NAD(+)-binding positions include 2-3 (RI), aspartate 24, and arginine 71. D-glyceraldehyde 3-phosphate contacts are provided by residues 142–144 (SCT), threonine 173, 202–203 (TG), and arginine 225. The active-site Nucleophile is the cysteine 143. Asparagine 307 provides a ligand contact to NAD(+).

Belongs to the glyceraldehyde-3-phosphate dehydrogenase family.

It is found in the cytoplasm. It catalyses the reaction D-glyceraldehyde 3-phosphate + phosphate + NAD(+) = (2R)-3-phospho-glyceroyl phosphate + NADH + H(+). The protein operates within carbohydrate degradation; glycolysis; pyruvate from D-glyceraldehyde 3-phosphate: step 1/5. In terms of biological role, key enzyme in glycolysis that catalyzes the first step of the pathway by converting D-glyceraldehyde 3-phosphate (G3P) into 3-phospho-D-glyceroyl phosphate. Essential for the maintenance of cellular ATP levels and carbohydrate metabolism. This chain is Glyceraldehyde-3-phosphate dehydrogenase, cytosolic (GAPC), found in Nicotiana tabacum (Common tobacco).